We begin with the raw amino-acid sequence, 732 residues long: Acylamino-acid-releasing enzyme (732 aa).

Met1 carries the blocked amino end (Met); alternate modification. An N-acetylmethionine; alternate modification is found at Met1. Ser185 and Ser187 each carry phosphoserine. Active-site charge relay system residues include Ser587, Asp675, and His707.

It belongs to the peptidase S9C family. In terms of assembly, homotetramer.

The protein localises to the cytoplasm. The catalysed reaction is Cleavage of an N-acetyl or N-formyl amino acid from the N-terminus of a polypeptide.. With respect to regulation, homotetramerization is required for activity. Tetramerization results in the formation of a gated channel which is involved in substrate selection and substrate access to the catalytic sites. In terms of biological role, this enzyme catalyzes the hydrolysis of the N-terminal peptide bond of an N-acetylated peptide to generate an N-acetylated amino acid and a peptide with a free N-terminus. It preferentially cleaves off Ac-Ala, Ac-Met and Ac-Ser. Also, involved in the degradation of oxidized and glycated proteins. The protein is Acylamino-acid-releasing enzyme (Apeh) of Rattus norvegicus (Rat).